The primary structure comprises 61 residues: L-amino-acid oxidase (61 aa).

FAD is bound at residue 43-44; that stretch reads MA.

The protein belongs to the flavin monoamine oxidase family. FIG1 subfamily. As to quaternary structure, homodimer; non-covalently linked. FAD serves as cofactor. N-glycosylated. Expressed by the venom gland.

The protein resides in the secreted. The catalysed reaction is an L-alpha-amino acid + O2 + H2O = a 2-oxocarboxylate + H2O2 + NH4(+). It carries out the reaction L-leucine + O2 + H2O = 4-methyl-2-oxopentanoate + H2O2 + NH4(+). Catalyzes an oxidative deamination of predominantly hydrophobic and aromatic L-amino acids, thus producing hydrogen peroxide that may contribute to the diverse toxic effects of this enzyme. Shows activity on L-Leu. Exhibits diverse biological activities, such as apoptosis, antibacterial activities against both Gram-negative and Gram-positive bacteria and antiparasitic activities, as well as induction of platelet aggregation. Effects of snake L-amino oxidases on platelets are controversial, since they either induce aggregation or inhibit agonist-induced aggregation. These different effects are probably due to different experimental conditions. This protein may also induce hemorrhage, hemolysis, and edema. This Crotalus durissus cascavella (Northeastern Brazilian rattlesnake) protein is L-amino-acid oxidase.